The primary structure comprises 603 residues: Probable potassium transport system protein Kup (603 aa).

12 consecutive transmembrane segments (helical) span residues 15–35, 43–63, 94–114, 135–155, 163–183, 209–229, 244–264, 283–303, 336–356, 365–385, 390–410, and 415–435; these read GLVF…IFLL, IIGV…VEYA, VAFV…DGVI, NIGQ…LFSV, ITWV…FSGI, GIIG…GEAL, AWRF…AFLI, ILYI…SQAM, IYIS…MLIF, AYGL…TSIF, NITK…FLLS, and IPHG…LILI.

Belongs to the HAK/KUP transporter (TC 2.A.72) family.

It localises to the cell membrane. It carries out the reaction K(+)(in) + H(+)(in) = K(+)(out) + H(+)(out). Its function is as follows. Transport of potassium into the cell. Likely operates as a K(+):H(+) symporter. This chain is Probable potassium transport system protein Kup, found in Methanosarcina barkeri (strain Fusaro / DSM 804).